The primary structure comprises 357 residues: DNA replication and repair protein RecF (357 aa).

30–37 (GANGSGKT) lines the ATP pocket.

This sequence belongs to the RecF family.

Its subcellular location is the cytoplasm. In terms of biological role, the RecF protein is involved in DNA metabolism; it is required for DNA replication and normal SOS inducibility. RecF binds preferentially to single-stranded, linear DNA. It also seems to bind ATP. The sequence is that of DNA replication and repair protein RecF from Salmonella heidelberg (strain SL476).